The chain runs to 196 residues: uncharacterized protein (196 aa).

This sequence to E.coli YjaG.

This is an uncharacterized protein from Haemophilus influenzae (strain ATCC 51907 / DSM 11121 / KW20 / Rd).